Consider the following 487-residue polypeptide: Multiple inositol polyphosphate phosphatase 1 (487 aa).

The signal sequence occupies residues 1–30 (MLRAPGCLLRTSVAPAAALAAALLSSLARC). Residue H89 is part of the active site. 2 N-linked (GlcNAc...) asparagine glycosylation sites follow: N242 and N481. Residues 484 to 487 (SDEL) carry the Prevents secretion from ER motif.

The protein belongs to the histidine acid phosphatase family. MINPP1 subfamily. In terms of processing, N-glycosylated. In terms of tissue distribution, widely expressed with highest levels in kidney, liver, cerebellum and placenta.

It localises to the endoplasmic reticulum lumen. The protein localises to the secreted. It is found in the cell membrane. The catalysed reaction is 1D-myo-inositol hexakisphosphate + H2O = 1D-myo-inositol 1,2,4,5,6-pentakisphosphate + phosphate. It catalyses the reaction 1D-myo-inositol 1,2,4,5,6-pentakisphosphate + H2O = 1D-myo-inositol 1,2,5,6-tetrakisphosphate + phosphate. The enzyme catalyses 1D-myo-inositol 1,2,5,6-tetrakisphosphate + H2O = 1D-myo-inositol 1,2,6-trisphosphate + phosphate. It carries out the reaction 1D-myo-inositol 1,2,6-trisphosphate + H2O = 1D-myo-inositol 1,2-bisphosphate + phosphate. The catalysed reaction is 1D-myo-inositol 1,2-bisphosphate + H2O = 1D-myo-inositol 2-phosphate + phosphate. It catalyses the reaction 1D-myo-inositol hexakisphosphate + H2O = 1D-myo-inositol 1,2,3,5,6-pentakisphosphate + phosphate. The enzyme catalyses 1D-myo-inositol 1,2,3,5,6-pentakisphosphate + H2O = 1D-myo-inositol 1,2,3,6-tetrakisphosphate + phosphate. It carries out the reaction 1D-myo-inositol 1,2,3,6-tetrakisphosphate + H2O = 1D-myo-inositol 1,2,3-trisphosphate + phosphate. The catalysed reaction is 1D-myo-inositol 1,2,3-trisphosphate + H2O = 1D-myo-inositol 2,3-bisphosphate + phosphate. It catalyses the reaction 1D-myo-inositol 2,3-bisphosphate + H2O = 1D-myo-inositol 2-phosphate + phosphate. The enzyme catalyses 1D-myo-inositol 1,3,4,5,6-pentakisphosphate + H2O = 1D-myo-inositol 1,4,5,6-tetrakisphosphate + phosphate. It carries out the reaction 1D-myo-inositol 1,4,5,6-tetrakisphosphate + H2O = 1D-myo-inositol 1,4,5-trisphosphate + phosphate. The catalysed reaction is (2R)-2,3-bisphosphoglycerate + H2O = (2R)-2-phosphoglycerate + phosphate. Its function is as follows. Multiple inositol polyphosphate phosphatase that hydrolyzes 1D-myo-inositol 1,3,4,5,6-pentakisphosphate (InsP5[2OH]) and 1D-myo-inositol hexakisphosphate (InsP6) to a range of less phosphorylated inositol phosphates. This regulates the availability of these various small molecule second messengers and metal chelators which control many aspects of cell physiology. Has a weak in vitro activity towards 1D-myo-inositol 1,4,5-trisphosphate which is unlikely to be physiologically relevant. By regulating intracellular inositol polyphosphates pools, which act as metal chelators, it may control the availability of intracellular calcium and iron, which are important for proper neuronal development and homeostasis. May have a dual substrate specificity, and function as a 2,3-bisphosphoglycerate 3-phosphatase hydrolyzing 2,3-bisphosphoglycerate to 2-phosphoglycerate. 2,3-bisphosphoglycerate (BPG) is formed as part of the Rapoport-Luebering glycolytic bypass and is a regulator of systemic oxygen homeostasis as the major allosteric effector of hemoglobin. In Homo sapiens (Human), this protein is Multiple inositol polyphosphate phosphatase 1.